The primary structure comprises 388 residues: Probable fatty acid desaturase DES1 (388 aa).

The segment at 1-33 is disordered; that stretch reads MATTPMTVVDHEAEEAVAKAREDDKSRQVDAFD. Over residues 9-30 the composition is skewed to basic and acidic residues; it reads VDHEAEEAVAKAREDDKSRQVD. 2 consecutive transmembrane segments (helical) span residues 62 to 82 and 85 to 105; these read LWYVVRDVAAVVALGTAAAAM and WAVWPVYWAVQGTMFWAFFVL. Residues 107–111 carry the Histidine box-1 motif; that stretch reads HDCGH. Residues 119-139 traverse the membrane as a helical segment; it reads TLNSVVGHLLHSFILIPYHGW. The short motif at 143 to 147 is the Histidine box-2 element; it reads HRTHH. The next 3 membrane-spanning stretches (helical) occupy residues 177–194, 226–246, and 248–268; these read IRFTAPYPLLLFPLYLFY, WCIMLASLLAMSCAFGPLQVL, and MYGLPYLVFVMWLDLVTYLHH. A Histidine box-3 motif is present at residues 310 to 314; sequence HVIHH.

Belongs to the fatty acid desaturase type 1 family. In terms of tissue distribution, highly expressed in root hair cells. Barely detected in panicle, shoot apex, stems and leaves.

The protein localises to the membrane. It participates in lipid metabolism; polyunsaturated fatty acid biosynthesis. The polypeptide is Probable fatty acid desaturase DES1 (Sorghum bicolor (Sorghum)).